Reading from the N-terminus, the 440-residue chain is Alpha-methylserine aldolase (440 aa).

Position 255 is an N6-(pyridoxal phosphate)lysine (K255).

The protein belongs to the SHMT family. Alpha-methylserine aldolase subfamily. In terms of assembly, homodimer. Pyridoxal 5'-phosphate serves as cofactor.

The enzyme catalyses 2-methyl-L-serine = formaldehyde + L-alanine. Catalyzes the reversible interconversion of alpha-methyl-L-serine to L-alanine and formaldehyde. The protein is Alpha-methylserine aldolase of Variovorax paradoxus.